Here is a 127-residue protein sequence, read N- to C-terminus: Small ribosomal subunit protein uS13 (127 aa).

The segment at 97–127 (PVRGQRTRTNARTRRGGRKTVAGKKKAAAKK) is disordered. Positions 101 to 127 (QRTRTNARTRRGGRKTVAGKKKAAAKK) are enriched in basic residues.

Belongs to the universal ribosomal protein uS13 family. In terms of assembly, part of the 30S ribosomal subunit. Forms a loose heterodimer with protein S19. Forms two bridges to the 50S subunit in the 70S ribosome.

In terms of biological role, located at the top of the head of the 30S subunit, it contacts several helices of the 16S rRNA. In the 70S ribosome it contacts the 23S rRNA (bridge B1a) and protein L5 of the 50S subunit (bridge B1b), connecting the 2 subunits; these bridges are implicated in subunit movement. Contacts the tRNAs in the A and P-sites. This Gloeobacter violaceus (strain ATCC 29082 / PCC 7421) protein is Small ribosomal subunit protein uS13.